The sequence spans 523 residues: DNA-(apurinic or apyrimidinic site) endonuclease 2 (523 aa).

E42 contributes to the Mg(2+) binding site. Y151 is an active-site residue. Residues D191, N193, and D294 each contribute to the Mg(2+) site. Catalysis depends on D191, which acts as the Proton donor/acceptor. The tract at residues 348-392 (MKKNKNNSPTQSENVSASASSGSSPTVSRANSVIDVDAYPPEKRR) is disordered. Polar residues predominate over residues 353-362 (NNSPTQSENV). Zn(2+) is bound by residues C458, H461, C484, and C508. A GRF-type zinc finger spans residues 458 to 517 (CEGHKEPCKYLTVRKPGINYGRKFWICARPVGELIKNSNAVSEEDTQPFQCRFFIWDSDW).

The protein belongs to the DNA repair enzymes AP/ExoA family. It depends on Mg(2+) as a cofactor. The cofactor is Mn(2+).

The protein localises to the nucleus. It carries out the reaction Exonucleolytic cleavage in the 3'- to 5'-direction to yield nucleoside 5'-phosphates.. In terms of biological role, DNA repair enzyme that cleaves apurinic/apyrimidinic (AP) sites and removes 3'-blocking groups present at single strand breaks of damaged DNA. Provides the majority of the AP-endonuclease (APE) activity. Repairs phleomycin D1-induced DNA damage. Plays a role in oxidative damage repair. The sequence is that of DNA-(apurinic or apyrimidinic site) endonuclease 2 (apn2) from Schizosaccharomyces pombe (strain 972 / ATCC 24843) (Fission yeast).